We begin with the raw amino-acid sequence, 470 residues long: Sugar transporter ESL1 (470 aa).

The short motif at 10 to 16 is the Essential for the localization to the vacuole membrane element; the sequence is LEAGLLL. Transmembrane regions (helical) follow at residues 28 to 48, 68 to 88, 99 to 119, 130 to 150, 157 to 177, 186 to 206, 268 to 288, 303 to 323, 332 to 352, 368 to 388, 404 to 424, and 430 to 450; these read ITAV…CFGC, VAQY…GAIF, KGTM…VALA, LSTG…IAEI, GAFV…FYVI, LALI…FIPE, VVIG…GLMY, IGSM…LILV, LLAS…SFCF, IGVV…PWII, LVTL…NFML, and GTFL…YAMV.

Belongs to the major facilitator superfamily. Sugar transporter (TC 2.A.1.1) family. Expressed in both shoots and roots. In roots, strongly expressed in pericycle and xylem parenchyma cells, and to a lesser extent in the root endodermis. In flowers, expressed in sepals.

The protein localises to the vacuole membrane. It is found in the vesicle. Its function is as follows. Sugar transporter. Transports monosaccharides across the vacuolar membrane independently from a proton gradient. May function coordinately with the vacuolar invertase to regulate osmotic pressure by affecting the accumulation of sugar in the cells under abiotic stress conditions. This Arabidopsis thaliana (Mouse-ear cress) protein is Sugar transporter ESL1.